We begin with the raw amino-acid sequence, 763 residues long: Amine oxidase [copper-containing] 3 (763 aa).

Over 1–5 (MNQKT) the chain is Cytoplasmic. A helical; Signal-anchor for type II membrane protein membrane pass occupies residues 6 to 26 (ILVLLILAVITIFALVCVLLV). At 27 to 763 (GRGGDGGEPS…AFSHGGFSHN (737 aa)) the chain is on the extracellular side. An O-linked (GalNAc...) serine glycan is attached at serine 43. N-linked (GlcNAc...) asparagine glycosylation occurs at asparagine 137. A disulfide bridge connects residues cysteine 198 and cysteine 199. Threonine 212 carries an O-linked (GalNAc...) threonine glycan. N-linked (GlcNAc...) asparagine glycans are attached at residues asparagine 232 and asparagine 294. The active-site Proton acceptor is aspartate 386. Cysteine 404 and cysteine 430 are joined by a disulfide. Residue tyrosine 471 is the Schiff-base intermediate with substrate; via topaquinone of the active site. Residue tyrosine 471 is modified to 2',4',5'-topaquinone. Residues histidine 520 and histidine 522 each coordinate Cu(2+). The Ca(2+) site is built by aspartate 529, leucine 530, aspartate 531, and glutamate 572. The N-linked (GlcNAc...) (complex) asparagine glycan is linked to asparagine 592. N-linked (GlcNAc...) asparagine glycosylation is present at asparagine 618. Ca(2+)-binding residues include glutamate 641, phenylalanine 663, and asparagine 665. The N-linked (GlcNAc...) asparagine glycan is linked to asparagine 666. Ca(2+) is bound by residues glutamate 667, aspartate 673, and leucine 674. The O-linked (GlcNAc) threonine glycan is linked to threonine 679. Histidine 684 is a Cu(2+) binding site. Cysteine 734 and cysteine 741 are joined by a disulfide.

The protein belongs to the copper/topaquinone oxidase family. As to quaternary structure, homodimer; disulfide-linked. Can heterodimerize with isoform 2 leading to reduced surface expression. Probably forms heterodimers with AOC2. Cu(2+) is required as a cofactor. The cofactor is Ca(2+). Requires L-topaquinone as cofactor. Topaquinone (TPQ) is generated by copper-dependent autoxidation of a specific tyrosyl residue. Post-translationally, N- and O-glycosylated. Strongly expressed on the high endothelial venules of peripheral lymph nodes and on hepatic endothelia. Also highly expressed in appendix, lung and small intestine. Expressed also in adipose tissue, in bone marrow, colon, heart, kidney, ovary, pancreas, placenta, prostate, skeletal muscle, spleen and testis. Isoform 2 seems to be the predominant transcript in fetal kidneys, fetal cartilage and fetal tonsils. The highest relative expression of isoform 2 occurs in skeletal muscle, heart, pancreas, kidney, and lung.

It is found in the cell membrane. The catalysed reaction is methylamine + O2 + H2O = formaldehyde + H2O2 + NH4(+). It carries out the reaction benzylamine + O2 + H2O = benzaldehyde + H2O2 + NH4(+). The enzyme catalyses 2-phenylethylamine + O2 + H2O = 2-phenylacetaldehyde + H2O2 + NH4(+). In terms of biological role, catalyzes the oxidative deamination of primary amines to the corresponding aldehydes with the concomitant production of hydrogen peroxide and ammonia. Has a preference for the primary monoamines methylamine and benzylamine. Could also act on 2-phenylethylamine but much less efficiently. At endothelial cells surface can also function as a cell adhesion protein that participates in lymphocyte extravasation and recirculation by mediating the binding of lymphocytes to peripheral lymph node vascular endothelial cells in an L-selectin-independent fashion. Functionally, has no semicarbazide-sensitive amine oxidase (SSAO) activity. The chain is Amine oxidase [copper-containing] 3 from Homo sapiens (Human).